The following is a 612-amino-acid chain: Dihydroxy-acid dehydratase (612 aa).

Position 81 (Asp-81) interacts with Mg(2+). [2Fe-2S] cluster is bound at residue Cys-122. Positions 123 and 124 each coordinate Mg(2+). An N6-carboxylysine modification is found at Lys-124. Cys-195 contributes to the [2Fe-2S] cluster binding site. A Mg(2+)-binding site is contributed by Glu-491. Ser-517 serves as the catalytic Proton acceptor.

This sequence belongs to the IlvD/Edd family. Homodimer. Requires [2Fe-2S] cluster as cofactor. The cofactor is Mg(2+).

The catalysed reaction is (2R)-2,3-dihydroxy-3-methylbutanoate = 3-methyl-2-oxobutanoate + H2O. It catalyses the reaction (2R,3R)-2,3-dihydroxy-3-methylpentanoate = (S)-3-methyl-2-oxopentanoate + H2O. The protein operates within amino-acid biosynthesis; L-isoleucine biosynthesis; L-isoleucine from 2-oxobutanoate: step 3/4. It participates in amino-acid biosynthesis; L-valine biosynthesis; L-valine from pyruvate: step 3/4. Functions in the biosynthesis of branched-chain amino acids. Catalyzes the dehydration of (2R,3R)-2,3-dihydroxy-3-methylpentanoate (2,3-dihydroxy-3-methylvalerate) into 2-oxo-3-methylpentanoate (2-oxo-3-methylvalerate) and of (2R)-2,3-dihydroxy-3-methylbutanoate (2,3-dihydroxyisovalerate) into 2-oxo-3-methylbutanoate (2-oxoisovalerate), the penultimate precursor to L-isoleucine and L-valine, respectively. The polypeptide is Dihydroxy-acid dehydratase (Sinorhizobium fredii (strain NBRC 101917 / NGR234)).